Consider the following 459-residue polypeptide: Argininosuccinate lyase (459 aa).

It belongs to the lyase 1 family. Argininosuccinate lyase subfamily.

The protein resides in the cytoplasm. It catalyses the reaction 2-(N(omega)-L-arginino)succinate = fumarate + L-arginine. Its pathway is amino-acid biosynthesis; L-arginine biosynthesis; L-arginine from L-ornithine and carbamoyl phosphate: step 3/3. This is Argininosuccinate lyase from Lactococcus lactis subsp. lactis (strain IL1403) (Streptococcus lactis).